We begin with the raw amino-acid sequence, 263 residues long: Fructose-bisphosphate aldolase class 1 (263 aa).

The active-site Schiff-base intermediate with dihydroxyacetone-P is Lys-177.

The protein belongs to the DeoC/FbaB aldolase family.

The enzyme catalyses beta-D-fructose 1,6-bisphosphate = D-glyceraldehyde 3-phosphate + dihydroxyacetone phosphate. Its function is as follows. Has aldolase activity with fructose 1,6-bisphosphate. May play a role in the biosynthesis of aromatic amino acids (AroAA). The chain is Fructose-bisphosphate aldolase class 1 (fba1) from Halobacterium salinarum (strain ATCC 29341 / DSM 671 / R1).